The following is a 90-amino-acid chain: Large ribosomal subunit protein bL27 (90 aa).

The interval 1 to 21 (MAHTKAGGTTRNSRDSAGRRL) is disordered.

The protein belongs to the bacterial ribosomal protein bL27 family.

The protein is Large ribosomal subunit protein bL27 of Metamycoplasma arthritidis (strain 158L3-1) (Mycoplasma arthritidis).